We begin with the raw amino-acid sequence, 109 residues long: Large ribosomal subunit protein bL19 (109 aa).

It belongs to the bacterial ribosomal protein bL19 family.

Functionally, this protein is located at the 30S-50S ribosomal subunit interface and may play a role in the structure and function of the aminoacyl-tRNA binding site. The sequence is that of Large ribosomal subunit protein bL19 from Rubrobacter xylanophilus (strain DSM 9941 / JCM 11954 / NBRC 16129 / PRD-1).